The primary structure comprises 595 residues: UvrABC system protein C (595 aa).

Residues 17-94 enclose the GIY-YIG domain; that stretch reads IEPGCYLMKD…IKQYQPRYNI (78 aa). The 36-residue stretch at 199 to 234 folds into the UVR domain; the sequence is KTILHNLEQKMQESSESLDFERAKEYRDLIQHIHNL.

This sequence belongs to the UvrC family. As to quaternary structure, interacts with UvrB in an incision complex.

The protein localises to the cytoplasm. The UvrABC repair system catalyzes the recognition and processing of DNA lesions. UvrC both incises the 5' and 3' sides of the lesion. The N-terminal half is responsible for the 3' incision and the C-terminal half is responsible for the 5' incision. The protein is UvrABC system protein C of Staphylococcus saprophyticus subsp. saprophyticus (strain ATCC 15305 / DSM 20229 / NCIMB 8711 / NCTC 7292 / S-41).